The following is an 83-amino-acid chain: Small ribosomal subunit protein uS17 (83 aa).

This sequence belongs to the universal ribosomal protein uS17 family. In terms of assembly, part of the 30S ribosomal subunit.

Its function is as follows. One of the primary rRNA binding proteins, it binds specifically to the 5'-end of 16S ribosomal RNA. In Magnetococcus marinus (strain ATCC BAA-1437 / JCM 17883 / MC-1), this protein is Small ribosomal subunit protein uS17.